The primary structure comprises 129 residues: Glycine cleavage system H protein (129 aa).

Residues 24–106 (TFTVGITEHA…FGDGWLFRIK (83 aa)) form the Lipoyl-binding domain. Lys65 is modified (N6-lipoyllysine).

The protein belongs to the GcvH family. The glycine cleavage system is composed of four proteins: P, T, L and H. Requires (R)-lipoate as cofactor.

In terms of biological role, the glycine cleavage system catalyzes the degradation of glycine. The H protein shuttles the methylamine group of glycine from the P protein to the T protein. This Pseudoalteromonas translucida (strain TAC 125) protein is Glycine cleavage system H protein.